A 556-amino-acid polypeptide reads, in one-letter code: Inositol 1,4,5-trisphosphate receptor-interacting protein (556 aa).

An N-terminal signal peptide occupies residues 1 to 15 (MALGLFRVCLVVVTA). The Extracellular portion of the chain corresponds to 16 to 88 (IINHPLLFPR…EGQQQNESRT (73 aa)). Residues Asn-27 and Asn-84 are each glycosylated (N-linked (GlcNAc...) asparagine). A coiled-coil region spans residues 32 to 87 (ENEEEIIRQMQAHQEKLQLEQLRLEEEMARLAADKEAEKEALERVAEEGQQQNESR). The chain crosses the membrane as a helical span at residues 89-107 (AWDLWSTLCMILFLVIEVW). Residues 108–556 (RQDHQDAPSP…ASLPPKTVIL (449 aa)) lie on the Cytoplasmic side of the membrane.

This sequence belongs to the ITPRIP family. Interacts with ITPR.

The protein resides in the cell membrane. It is found in the nucleus outer membrane. Its function is as follows. Enhances Ca(2+)-mediated inhibition of inositol 1,4,5-triphosphate receptor (ITPR) Ca(2+) release. This chain is Inositol 1,4,5-trisphosphate receptor-interacting protein (ITPRIP), found in Bos taurus (Bovine).